Reading from the N-terminus, the 175-residue chain is Peptide deformylase (175 aa).

2 residues coordinate Fe cation: Cys98 and His140. Glu141 is an active-site residue. A Fe cation-binding site is contributed by His144.

The protein belongs to the polypeptide deformylase family. Fe(2+) serves as cofactor.

It carries out the reaction N-terminal N-formyl-L-methionyl-[peptide] + H2O = N-terminal L-methionyl-[peptide] + formate. Its function is as follows. Removes the formyl group from the N-terminal Met of newly synthesized proteins. Requires at least a dipeptide for an efficient rate of reaction. N-terminal L-methionine is a prerequisite for activity but the enzyme has broad specificity at other positions. The chain is Peptide deformylase from Nitrobacter hamburgensis (strain DSM 10229 / NCIMB 13809 / X14).